We begin with the raw amino-acid sequence, 309 residues long: Olfactory receptor 5B2 (309 aa).

At 1–23 (MENCTEVTKFILLGLTSVPELQI) the chain is on the extracellular side. N-linked (GlcNAc...) asparagine glycosylation is present at Asn3. A helical transmembrane segment spans residues 24 to 47 (PLFILFTFIYLLTLCGNLGMMLLI). The Cytoplasmic portion of the chain corresponds to 48–55 (LMDSCLHT). Residues 56-77 (PMYFFLSNLSLVDFGYSSAVTP) traverse the membrane as a helical segment. At 78–98 (KVMAGFLRGDKVISYNACAVQ) the chain is on the extracellular side. An intrachain disulfide couples Cys95 to Cys187. A helical membrane pass occupies residues 99 to 118 (MFFFVALATVENYLLASMAY). Residues 119–137 (DRYAAVCKPLHYTTTMTAS) lie on the Cytoplasmic side of the membrane. The chain crosses the membrane as a helical span at residues 138–156 (VGACLALGSYVCGFLNASF). The Extracellular segment spans residues 157 to 193 (HIGGIFSLSFCKSNLVHHFFCDVPAVMALSCSDKHTS). A helical membrane pass occupies residues 194–217 (EVILVFMSSFNIFFVLLVIFISYL). Residues 218–234 (FIFITILKMHSAKGHQK) lie on the Cytoplasmic side of the membrane. A helical membrane pass occupies residues 235–257 (ALSTCASHFTAVSVFYGTVIFIY). Over 258-270 (LQPSSSHSMDTDK) the chain is Extracellular. The chain crosses the membrane as a helical span at residues 271-290 (MASVFYAMIIPMLNPVVYSL). Over 291 to 309 (RNREVQNAFKKVLRRQKFL) the chain is Cytoplasmic.

Belongs to the G-protein coupled receptor 1 family.

The protein localises to the cell membrane. Functionally, odorant receptor. This Homo sapiens (Human) protein is Olfactory receptor 5B2 (OR5B2).